Consider the following 348-residue polypeptide: Putative 4-hydroxythreonine-4-phosphate dehydrogenase 2 (348 aa).

The a divalent metal cation site is built by H180, H224, and H279.

This sequence belongs to the PdxA family. As to quaternary structure, homodimer. Zn(2+) serves as cofactor. The cofactor is Mg(2+). Requires Co(2+) as cofactor.

It is found in the cytoplasm. It carries out the reaction 4-(phosphooxy)-L-threonine + NAD(+) = 3-amino-2-oxopropyl phosphate + CO2 + NADH. It participates in cofactor biosynthesis; pyridoxine 5'-phosphate biosynthesis; pyridoxine 5'-phosphate from D-erythrose 4-phosphate: step 4/5. Its function is as follows. Catalyzes the NAD(P)-dependent oxidation of 4-(phosphooxy)-L-threonine (HTP) into 2-amino-3-oxo-4-(phosphooxy)butyric acid which spontaneously decarboxylates to form 3-amino-2-oxopropyl phosphate (AHAP). In Rhizobium meliloti (strain 1021) (Ensifer meliloti), this protein is Putative 4-hydroxythreonine-4-phosphate dehydrogenase 2.